The sequence spans 115 residues: Large ribosomal subunit protein bL19 (115 aa).

Belongs to the bacterial ribosomal protein bL19 family.

In terms of biological role, this protein is located at the 30S-50S ribosomal subunit interface and may play a role in the structure and function of the aminoacyl-tRNA binding site. The sequence is that of Large ribosomal subunit protein bL19 from Klebsiella pneumoniae (strain 342).